The following is a 191-amino-acid chain: Phosphoheptose isomerase (191 aa).

The SIS domain maps to 37-191; it reads ITSSLKQGGK…LILLIEQSLL (155 aa). Residue 52–54 participates in substrate binding; sequence NGG. The Zn(2+) site is built by His61 and Glu65. Substrate contacts are provided by residues Glu65, 93–94, 119–121, Ser124, and Gln172; these read ND and STS. 2 residues coordinate Zn(2+): Gln172 and His180.

It belongs to the SIS family. GmhA subfamily. The cofactor is Zn(2+).

It localises to the cytoplasm. The enzyme catalyses 2 D-sedoheptulose 7-phosphate = D-glycero-alpha-D-manno-heptose 7-phosphate + D-glycero-beta-D-manno-heptose 7-phosphate. It participates in carbohydrate biosynthesis; D-glycero-D-manno-heptose 7-phosphate biosynthesis; D-glycero-alpha-D-manno-heptose 7-phosphate and D-glycero-beta-D-manno-heptose 7-phosphate from sedoheptulose 7-phosphate: step 1/1. Functionally, catalyzes the isomerization of sedoheptulose 7-phosphate in D-glycero-D-manno-heptose 7-phosphate. This chain is Phosphoheptose isomerase, found in Cytophaga hutchinsonii (strain ATCC 33406 / DSM 1761 / CIP 103989 / NBRC 15051 / NCIMB 9469 / D465).